An 863-amino-acid chain; its full sequence is Importin subunit beta-1 (863 aa).

HEAT repeat units follow at residues 2–31 (NAGE…AART), 33–62 (FAQY…LALK), 85–124 (VEIK…ELAT), 129–159 (DLMV…YICE), 170–201 (SNAI…LYDS), 212–248 (EYER…MHLY), 253–299 (PFYM…EIQE), 314–360 (FARA…QVVG), 364–392 (VNPV…AFGS), 399–439 (VAML…SSFV), 449–481 (LSPM…VCHF), 496–530 (YEAI…LITF), 536–586 (LPMI…IIRR), 592–630 (RTSS…MNSL), 635–671 (EVYV…LARA), 677–715 (LPYC…ALAI), 720–767 (QTYL…ITQA), 778–815 (QPYV…LAES), and 822–861 (KSYF…KRQA). The 81-residue stretch at 21 to 101 (AEKQLENAAR…KSLALQTLGS (81 aa)) folds into the Importin N-terminal domain.

This sequence belongs to the importin beta family. Importin beta-1 subfamily. As to quaternary structure, forms a complex with an importin alpha subunit. Interacts with Ran; interacts specifically with the GTP-bound form of Ran (GTP-Ran), protecting it from GTP hydrolysis and nucleotide exchange. Interacts with nucleoporins.

Its subcellular location is the cytoplasm. The protein localises to the nucleus envelope. It is found in the nucleus. It localises to the nuclear pore complex. Functionally, importin beta subunit that functions in nuclear protein import through association with the importin alpha subunit, which binds to the clasical nuclear localization signal (cNLS) in cargo substrates. Docking of the importin/substrate complex to the nuclear pore complex (NPC) is mediated by importin beta through binding to nucleoporin FxFG repeats and the complex is subsequently translocated through the pore by an energy requiring, Ran-dependent mechanism. At the nucleoplasmic side of the NPC, GTP-Ran binds to importin beta and the three components separate, leading to release of the cargo. Importin alpha and beta are re-exported from the nucleus to the cytoplasm where GTP hydrolysis releases Ran from importin beta. The directionality of nuclear import is thought to be conferred by an asymmetric distribution of the GTP- and GDP-bound forms of Ran between the cytoplasm and nucleus. This is Importin subunit beta-1 from Schizosaccharomyces pombe (strain 972 / ATCC 24843) (Fission yeast).